We begin with the raw amino-acid sequence, 452 residues long: FERM domain-containing protein 8 (452 aa).

One can recognise an FERM domain in the interval 28 to 374 (MDVIIYLIND…YCIELSQSTE (347 aa)). The span at 373–387 (TESPASDSTPGNSQL) shows a compositional bias: polar residues. The interval 373 to 395 (TESPASDSTPGNSQLSEKRSKLK) is disordered.

Its subcellular location is the cytoplasm. The protein resides in the cytosol. It is found in the cell membrane. Promotes the cell surface stability of RHBDF1 and RHBDF2 and prevents their degradation via the endolysosomal pathway. By acting on RHBDF proteins, involved in ADAM17-mediated ligand shedding. May negatively regulate Wnt signaling. The polypeptide is FERM domain-containing protein 8 (frmd8) (Xenopus laevis (African clawed frog)).